Reading from the N-terminus, the 377-residue chain is Queuine tRNA-ribosyltransferase (377 aa).

Aspartate 89 serves as the catalytic Proton acceptor. Substrate contacts are provided by residues 89–93 (DSGGF), aspartate 143, glutamine 187, and glycine 214. The tract at residues 245–251 (GVGKPED) is RNA binding. Residue aspartate 264 is the Nucleophile of the active site. Positions 269 to 273 (TRNAR) are RNA binding; important for wobble base 34 recognition. Zn(2+)-binding residues include cysteine 302, cysteine 304, cysteine 307, and histidine 333.

This sequence belongs to the queuine tRNA-ribosyltransferase family. In terms of assembly, homodimer. Within each dimer, one monomer is responsible for RNA recognition and catalysis, while the other monomer binds to the replacement base PreQ1. Zn(2+) serves as cofactor.

The enzyme catalyses 7-aminomethyl-7-carbaguanine + guanosine(34) in tRNA = 7-aminomethyl-7-carbaguanosine(34) in tRNA + guanine. It participates in tRNA modification; tRNA-queuosine biosynthesis. Catalyzes the base-exchange of a guanine (G) residue with the queuine precursor 7-aminomethyl-7-deazaguanine (PreQ1) at position 34 (anticodon wobble position) in tRNAs with GU(N) anticodons (tRNA-Asp, -Asn, -His and -Tyr). Catalysis occurs through a double-displacement mechanism. The nucleophile active site attacks the C1' of nucleotide 34 to detach the guanine base from the RNA, forming a covalent enzyme-RNA intermediate. The proton acceptor active site deprotonates the incoming PreQ1, allowing a nucleophilic attack on the C1' of the ribose to form the product. After dissociation, two additional enzymatic reactions on the tRNA convert PreQ1 to queuine (Q), resulting in the hypermodified nucleoside queuosine (7-(((4,5-cis-dihydroxy-2-cyclopenten-1-yl)amino)methyl)-7-deazaguanosine). In Shewanella piezotolerans (strain WP3 / JCM 13877), this protein is Queuine tRNA-ribosyltransferase.